A 405-amino-acid chain; its full sequence is Secreted aspartic protease FUS4 (405 aa).

Positions 1 to 24 (MLAIATLHVALQVFGAFSLSHAAA) are cleaved as a signal peptide. One can recognise a Peptidase A1 domain in the interval 49 to 400 (YLFNVTVGSP…NFEERSFGLA (352 aa)). N-linked (GlcNAc...) asparagine glycosylation is found at Asn-52, Asn-61, Asn-107, and Asn-123. A disulfide bond links Cys-318 and Cys-356.

The protein belongs to the peptidase A1 family.

It localises to the secreted. In terms of biological role, secreted aspartic protease; part of the gene cluster that mediates the biosynthesis of the mycotoxin fusarin C. Within the cluster, FUS1, FUS2, FUS8 and FUS9 are sufficient for fusarin production. The other FUS cluster members are not essential for fusarin C biosynthesis. The sequence is that of Secreted aspartic protease FUS4 from Gibberella fujikuroi (strain CBS 195.34 / IMI 58289 / NRRL A-6831) (Bakanae and foot rot disease fungus).